We begin with the raw amino-acid sequence, 705 residues long: Translation factor GUF1 homolog, mitochondrial (705 aa).

A mitochondrion-targeting transit peptide spans 1–20 (MVCHRYLLGLGASTLCLRRL). Residues 72 to 92 (PVEDNGTTNLTGTGEATSETG) are disordered. The segment covering 76–90 (NGTTNLTGTGEATSE) has biased composition (polar residues). One can recognise a tr-type G domain in the interval 105-288 (NRMRNFCIIA…AVVERIPPPK (184 aa)). GTP is bound by residues 114 to 121 (AHVDHGKS), 181 to 185 (DTPGH), and 235 to 238 (NKID).

It belongs to the TRAFAC class translation factor GTPase superfamily. Classic translation factor GTPase family. LepA subfamily.

It localises to the mitochondrion inner membrane. It catalyses the reaction GTP + H2O = GDP + phosphate + H(+). In terms of biological role, promotes mitochondrial protein synthesis. May act as a fidelity factor of the translation reaction, by catalyzing a one-codon backward translocation of tRNAs on improperly translocated ribosomes. Binds to mitochondrial ribosomes in a GTP-dependent manner. The protein is Translation factor GUF1 homolog, mitochondrial of Babesia bovis.